The sequence spans 105 residues: UPF0235 protein Mext_2130 (105 aa).

Belongs to the UPF0235 family.

In Methylorubrum extorquens (strain PA1) (Methylobacterium extorquens), this protein is UPF0235 protein Mext_2130.